Here is a 310-residue protein sequence, read N- to C-terminus: tRNA dimethylallyltransferase (310 aa).

Residue 10-17 (GPTAVGKS) coordinates ATP. 12 to 17 (TAVGKS) contacts substrate. The interval 35–38 (DSMQ) is interaction with substrate tRNA.

It belongs to the IPP transferase family. In terms of assembly, monomer. It depends on Mg(2+) as a cofactor.

The enzyme catalyses adenosine(37) in tRNA + dimethylallyl diphosphate = N(6)-dimethylallyladenosine(37) in tRNA + diphosphate. In terms of biological role, catalyzes the transfer of a dimethylallyl group onto the adenine at position 37 in tRNAs that read codons beginning with uridine, leading to the formation of N6-(dimethylallyl)adenosine (i(6)A). This Clostridium perfringens (strain 13 / Type A) protein is tRNA dimethylallyltransferase.